The following is a 110-amino-acid chain: Toxin HigB-2 (110 aa).

Toxic component of a type II toxin-antitoxin (TA) system. Inhibits translation by cleavage of mRNA. This Vibrio cholerae serotype O1 (strain ATCC 39315 / El Tor Inaba N16961) protein is Toxin HigB-2 (higB-2).